Here is a 358-residue protein sequence, read N- to C-terminus: Variant-surface-glycoprotein phospholipase C (358 aa).

Residues 25–198 (IGQVYMVGAH…STRRIFLVVR (174 aa)) enclose the PI-PLC X-box domain.

As to quaternary structure, monomer. The N-terminus is blocked.

It is found in the membrane. It carries out the reaction a 6-(alpha-D-glucosaminyl)-1-(1,2-diacyl-sn-glycero-3-phospho)-1D-myo-inositol = 6-(alpha-D-glucosaminyl)-1D-myo-inositol 1,2-cyclic phosphate + a 1,2-diacyl-sn-glycerol. By hydrolysis of the attached glycolipid, releases soluble variant surface glycoprotein containing phosphoinositol from the cell wall of T.brucei after cell lysis. It also cleaves similar membrane anchors on some mammalian proteins. VSG lipase may play a role in processes such as parasite differentiation or antigenic variation. The polypeptide is Variant-surface-glycoprotein phospholipase C (Trypanosoma brucei brucei).